The sequence spans 790 residues: Lysine biosynthesis regulatory protein LYS14 (790 aa).

Disordered regions lie at residues 1 to 50 (MFES…SCFE) and 72 to 157 (FNHK…YSRN). A compositionally biased stretch (low complexity) spans 35–47 (SGSSFTNSGTSTS). Composition is skewed to polar residues over residues 75-113 (KQMTSPSNSNIGGENVESTTSSNDGSNENAGHPTTSEQD) and 120-142 (TISQADDNGHSSLTPNPAVTSTV). A DNA-binding region (zn(2)-C6 fungal-type) is located at residues 159 to 186 (CSECKRRRMKCDETKPTCWQCARLNRQC). Residues 195–258 (KKRRTSNAQR…PKPITDNGKN (64 aa)) form a disordered region. The span at 222–239 (ARKRQHSSCKAEKKKKVR) shows a compositional bias: basic residues.

The protein resides in the nucleus. Functionally, activates the transcription of lysine biosynthesis genes. This activation is dependent on the inducer alpha-aminoadipate semialdehyde and repressed by lysine. The polypeptide is Lysine biosynthesis regulatory protein LYS14 (LYS14) (Saccharomyces cerevisiae (strain ATCC 204508 / S288c) (Baker's yeast)).